Here is a 255-residue protein sequence, read N- to C-terminus: Aliphatic sulfonates import ATP-binding protein SsuB (255 aa).

The region spanning 5-231 is the ABC transporter domain; that stretch reads IRVNEKAFGK…PRSRTSPVFQ (227 aa). ATP is bound at residue 39 to 46; the sequence is GPSGCGKS.

It belongs to the ABC transporter superfamily. Aliphatic sulfonates importer (TC 3.A.1.17.2) family. As to quaternary structure, the complex is composed of two ATP-binding proteins (SsuB), two transmembrane proteins (SsuC) and a solute-binding protein (SsuA).

It localises to the cell membrane. The catalysed reaction is ATP + H2O + aliphatic sulfonate-[sulfonate-binding protein]Side 1 = ADP + phosphate + aliphatic sulfonateSide 2 + [sulfonate-binding protein]Side 1.. Its function is as follows. Part of the ABC transporter complex SsuABC involved in aliphatic sulfonates import. Responsible for energy coupling to the transport system. This Bacillus licheniformis (strain ATCC 14580 / DSM 13 / JCM 2505 / CCUG 7422 / NBRC 12200 / NCIMB 9375 / NCTC 10341 / NRRL NRS-1264 / Gibson 46) protein is Aliphatic sulfonates import ATP-binding protein SsuB.